A 261-amino-acid polypeptide reads, in one-letter code: Ribosomal RNA small subunit methyltransferase J (261 aa).

S-adenosyl-L-methionine-binding positions include 109-110 (RD), 125-126 (ER), and Asp-179.

This sequence belongs to the methyltransferase superfamily. RsmJ family.

The protein localises to the cytoplasm. The enzyme catalyses guanosine(1516) in 16S rRNA + S-adenosyl-L-methionine = N(2)-methylguanosine(1516) in 16S rRNA + S-adenosyl-L-homocysteine + H(+). Specifically methylates the guanosine in position 1516 of 16S rRNA. This chain is Ribosomal RNA small subunit methyltransferase J, found in Pseudomonas paraeruginosa (strain DSM 24068 / PA7) (Pseudomonas aeruginosa (strain PA7)).